Here is a 194-residue protein sequence, read N- to C-terminus: Imidazoleglycerol-phosphate dehydratase (194 aa).

The protein belongs to the imidazoleglycerol-phosphate dehydratase family.

It is found in the cytoplasm. The catalysed reaction is D-erythro-1-(imidazol-4-yl)glycerol 3-phosphate = 3-(imidazol-4-yl)-2-oxopropyl phosphate + H2O. It functions in the pathway amino-acid biosynthesis; L-histidine biosynthesis; L-histidine from 5-phospho-alpha-D-ribose 1-diphosphate: step 6/9. This chain is Imidazoleglycerol-phosphate dehydratase, found in Methanothermobacter thermautotrophicus (strain ATCC 29096 / DSM 1053 / JCM 10044 / NBRC 100330 / Delta H) (Methanobacterium thermoautotrophicum).